Here is a 223-residue protein sequence, read N- to C-terminus: Transmembrane protein 114 (223 aa).

A helical transmembrane segment spans residues 7 to 27 (GLAGAAALTGALSFVLLAAAI). N-linked (GlcNAc...) asparagine glycans are attached at residues asparagine 55 and asparagine 89. 3 consecutive transmembrane segments (helical) span residues 106–126 (FVIL…TGFL), 134–154 (LLLL…LAGI), and 189–209 (LALG…FLAA).

It belongs to the PMP-22/EMP/MP20 family.

It is found in the cell junction. The protein resides in the tight junction. Its subcellular location is the lateral cell membrane. It localises to the apical cell membrane. The protein is Transmembrane protein 114 of Homo sapiens (Human).